Reading from the N-terminus, the 231-residue chain is Flagellar L-ring protein (231 aa).

Positions 1–18 are cleaved as a signal peptide; that stretch reads MNRLMIVSLLGIATVLGG. Cys19 carries N-palmitoyl cysteine lipidation. A lipid anchor (S-diacylglycerol cysteine) is attached at Cys19. Positions 118–141 are disordered; it reads LSLSAEYGGSRDAKGDSQAGQSNS.

It belongs to the FlgH family. The basal body constitutes a major portion of the flagellar organelle and consists of four rings (L,P,S, and M) mounted on a central rod.

It localises to the cell outer membrane. Its subcellular location is the bacterial flagellum basal body. Its function is as follows. Assembles around the rod to form the L-ring and probably protects the motor/basal body from shearing forces during rotation. The chain is Flagellar L-ring protein from Pseudomonas paraeruginosa (strain DSM 24068 / PA7) (Pseudomonas aeruginosa (strain PA7)).